We begin with the raw amino-acid sequence, 206 residues long: Large ribosomal subunit protein uL4 (206 aa).

The segment at 46–77 (GTRAQKDREQVRHSTKKPFKQKGTGNARAGMT) is disordered.

Belongs to the universal ribosomal protein uL4 family. Part of the 50S ribosomal subunit.

In terms of biological role, one of the primary rRNA binding proteins, this protein initially binds near the 5'-end of the 23S rRNA. It is important during the early stages of 50S assembly. It makes multiple contacts with different domains of the 23S rRNA in the assembled 50S subunit and ribosome. Functionally, forms part of the polypeptide exit tunnel. The protein is Large ribosomal subunit protein uL4 of Paracidovorax citrulli (strain AAC00-1) (Acidovorax citrulli).